The primary structure comprises 296 residues: Sulfotransferase 1E1 (296 aa).

Lys49–Trp54 is a binding site for 3'-phosphoadenylyl sulfate. Lys107–His109 serves as a coordination point for substrate. His109 serves as the catalytic Proton acceptor. 3'-phosphoadenylyl sulfate is bound by residues Arg131, Ser139, Tyr194, Thr228–Met233, and Arg258–Gly260.

The protein belongs to the sulfotransferase 1 family. In terms of assembly, homodimer. The N-terminus is blocked. In terms of tissue distribution, adrenal gland and much less in liver. Detectable only during pregnancy in uterine.

It is found in the cytoplasm. The protein localises to the cytosol. It carries out the reaction estrone + 3'-phosphoadenylyl sulfate = estrone 3-sulfate + adenosine 3',5'-bisphosphate + H(+). It catalyses the reaction (24S)-hydroxycholesterol + 3'-phosphoadenylyl sulfate = (24S)-hydroxycholesterol 3-sulfate + adenosine 3',5'-bisphosphate + H(+). The catalysed reaction is 17beta-estradiol + 3'-phosphoadenylyl sulfate = 17beta-estradiol 3-sulfate + adenosine 3',5'-bisphosphate + H(+). The enzyme catalyses 3beta-hydroxyandrost-5-en-17-one + 3'-phosphoadenylyl sulfate = dehydroepiandrosterone 3-sulfate + adenosine 3',5'-bisphosphate + H(+). It carries out the reaction 4-ethylphenol + 3'-phosphoadenylyl sulfate = 4-ethylphenyl sulfate + adenosine 3',5'-bisphosphate + H(+). With respect to regulation, inhibited by estradiol. Sulfotransferase that utilizes 3'-phospho-5'-adenylyl sulfate (PAPS) as sulfonate donor to catalyze the sulfate conjugation of estradiol and estrone. Is a key enzyme in estrogen homeostasis, the sulfation of estrogens leads to their inactivation. Also sulfates dehydroepiandrosterone (DHEA), pregnenolone, (24S)-hydroxycholesteroland xenobiotic compounds like ethinylestradiol, equalenin, diethyl stilbesterol and 1-naphthol at significantly lower efficiency. Does not sulfonate cortisol, testosterone and dopamine. May play a role in gut microbiota-host metabolic interaction. O-sulfonates 4-ethylphenol (4-EP), a dietary tyrosine-derived metabolite produced by gut bacteria. The product 4-EPS crosses the blood-brain barrier and may negatively regulate oligodendrocyte maturation and myelination, affecting the functional connectivity of different brain regions associated with the limbic system. In Cavia porcellus (Guinea pig), this protein is Sulfotransferase 1E1 (SULT1E1).